We begin with the raw amino-acid sequence, 356 residues long: Staphylococcal superantigen-like 3 (356 aa).

The first 30 residues, 1–30 (MKMRTIAKTSLALGLLTTGAITVTTQSVKA), serve as a signal peptide directing secretion. The interval 61-165 (ATTQAANTRQ…TIKQAQTDMT (105 aa)) is disordered. Positions 69–104 (RQERTPKLEKAPNTNEEKTSASKIEKISQPKQEEQK) are enriched in basic and acidic residues. Positions 114–141 (PKQEQSQTTTESTTPKTKVTTPPSTNTP) are enriched in low complexity. The segment covering 142-164 (QPMQSTKSDTPQSPTIKQAQTDM) has biased composition (polar residues). A sialyl Lewis X-binding region spans residues 228-326 (IDVFIVLEDN…VIKMKNGGKY (99 aa)).

It belongs to the staphylococcal/streptococcal toxin family. As to quaternary structure, interacts with host TLR2 (via its extracellular domain).

It localises to the secreted. Functionally, secreted protein that plays an essential role in immune innate response inhibition by interacting with and inhibiting host TLR2. In turn, bacteria recognition by immune cells is impaired and cytokine production is inhibited. Mechanistically, by interacting with TLR2, blocks ligand binding and thus inhibits activation. Second, by interacting with an already formed TLR2-lipopeptide complex, prevents TLR heterodimerization and downstream signaling. The interaction with host TLR2 does not involve sialyl Lewis X interactions. This Staphylococcus aureus (strain NCTC 8325 / PS 47) protein is Staphylococcal superantigen-like 3.